We begin with the raw amino-acid sequence, 455 residues long: GTPase Der (455 aa).

2 consecutive EngA-type G domains span residues 4-169 and 178-353; these read PVVA…PPKD and IQLS…EQHR. GTP-binding positions include 10 to 17, 57 to 61, 120 to 123, 184 to 191, 231 to 235, and 296 to 299; these read GRPNVGKS, DTGGL, NKCE, DTAGI, and NKWD. Residues 354 to 439 enclose the KH-like domain; it reads RRVSTSVVNE…PVKLFWRGKQ (86 aa).

It belongs to the TRAFAC class TrmE-Era-EngA-EngB-Septin-like GTPase superfamily. EngA (Der) GTPase family. As to quaternary structure, associates with the 50S ribosomal subunit.

Functionally, GTPase that plays an essential role in the late steps of ribosome biogenesis. The chain is GTPase Der from Synechococcus sp. (strain CC9311).